The following is a 66-amino-acid chain: Large ribosomal subunit protein bL31 (66 aa).

The Zn(2+) site is built by C16, C18, C36, and C39.

It belongs to the bacterial ribosomal protein bL31 family. Type A subfamily. As to quaternary structure, part of the 50S ribosomal subunit. It depends on Zn(2+) as a cofactor.

In terms of biological role, binds the 23S rRNA. In Nitratiruptor sp. (strain SB155-2), this protein is Large ribosomal subunit protein bL31.